Consider the following 216-residue polypeptide: Homologous-pairing protein 2 (216 aa).

Belongs to the HOP2 family. In terms of assembly, interacts with mcp7.

The protein resides in the nucleus. Functionally, required for proper homologous pairing and efficient cross-over and intragenic recombination during meiosis. Acts indirectly in a process facilitating homologous recombination. Acts during mid- to late-horse-tail period. This chain is Homologous-pairing protein 2 (meu13), found in Schizosaccharomyces pombe (strain 972 / ATCC 24843) (Fission yeast).